A 394-amino-acid polypeptide reads, in one-letter code: Mannosyl-3-phosphoglycerate synthase (394 aa).

This sequence belongs to the glycosyltransferase 2 family. Mg(2+) is required as a cofactor.

It is found in the cytoplasm. The catalysed reaction is (2R)-3-phosphoglycerate + GDP-alpha-D-mannose = 2-O-(alpha-D-mannosyl)-3-phosphoglycerate + GDP + H(+). The protein operates within carbohydrate biosynthesis; 2-(alpha-D-mannosyl)-D-glycerate biosynthesis; 2-(alpha-D-mannosyl)-D-glycerate from GDP-alpha-D-mannose (MPG route): step 1/2. Transfers a mannosyl group from GDP-mannose to phosphoglycerate to form mannosyl-3-phosphoglycerate (MPG). The enzyme is absolutely specific for GDP-mannose and 3-phosphoglycerate, and transfers the mannosyl group with retention of configuration. This chain is Mannosyl-3-phosphoglycerate synthase (mngA), found in Pyrococcus horikoshii (strain ATCC 700860 / DSM 12428 / JCM 9974 / NBRC 100139 / OT-3).